Reading from the N-terminus, the 236-residue chain is LexA repressor (236 aa).

A disordered region spans residues 1-25 (MNDSNDTSVAGGAAGADSRVLSADS). The segment at residues 51–71 (IREIGDAVGLTSTSSVAHQLR) is a DNA-binding region (H-T-H motif). Active-site for autocatalytic cleavage activity residues include serine 160 and lysine 197.

It belongs to the peptidase S24 family. As to quaternary structure, homodimer.

The enzyme catalyses Hydrolysis of Ala-|-Gly bond in repressor LexA.. Represses a number of genes involved in the response to DNA damage (SOS response), including recA and lexA. In the presence of single-stranded DNA, RecA interacts with LexA causing an autocatalytic cleavage which disrupts the DNA-binding part of LexA, leading to derepression of the SOS regulon and eventually DNA repair. This chain is LexA repressor, found in Mycobacterium tuberculosis (strain ATCC 25177 / H37Ra).